Reading from the N-terminus, the 316-residue chain is Ribosomal RNA small subunit methyltransferase H (316 aa).

Residues 35–37 (AGH), D55, F84, D105, and Q112 each bind S-adenosyl-L-methionine.

This sequence belongs to the methyltransferase superfamily. RsmH family.

The protein resides in the cytoplasm. It catalyses the reaction cytidine(1402) in 16S rRNA + S-adenosyl-L-methionine = N(4)-methylcytidine(1402) in 16S rRNA + S-adenosyl-L-homocysteine + H(+). In terms of biological role, specifically methylates the N4 position of cytidine in position 1402 (C1402) of 16S rRNA. In Streptococcus suis (strain 05ZYH33), this protein is Ribosomal RNA small subunit methyltransferase H.